Here is a 309-residue protein sequence, read N- to C-terminus: Oxygen-dependent coproporphyrinogen-III oxidase (309 aa).

Ser94 lines the substrate pocket. His98 and His108 together coordinate a divalent metal cation. His108 functions as the Proton donor in the catalytic mechanism. 110 to 112 (NVR) contributes to the substrate binding site. Residues His147 and His177 each coordinate a divalent metal cation. Residues 242–277 (YVEFNLVWDRGTLFGLQTGGRTESILMSLPPLVRWE) form an important for dimerization region. 260 to 262 (GGR) provides a ligand contact to substrate.

Belongs to the aerobic coproporphyrinogen-III oxidase family. In terms of assembly, homodimer. Requires a divalent metal cation as cofactor.

It is found in the cytoplasm. The enzyme catalyses coproporphyrinogen III + O2 + 2 H(+) = protoporphyrinogen IX + 2 CO2 + 2 H2O. It participates in porphyrin-containing compound metabolism; protoporphyrin-IX biosynthesis; protoporphyrinogen-IX from coproporphyrinogen-III (O2 route): step 1/1. In terms of biological role, involved in the heme biosynthesis. Catalyzes the aerobic oxidative decarboxylation of propionate groups of rings A and B of coproporphyrinogen-III to yield the vinyl groups in protoporphyrinogen-IX. The protein is Oxygen-dependent coproporphyrinogen-III oxidase of Yersinia pseudotuberculosis serotype O:1b (strain IP 31758).